The chain runs to 426 residues: Serine--tRNA ligase (426 aa).

233–235 (TAE) is an L-serine binding site. ATP is bound at residue 264-266 (RSE). E287 is an L-serine binding site. 351–354 (EISS) provides a ligand contact to ATP. S387 provides a ligand contact to L-serine.

Belongs to the class-II aminoacyl-tRNA synthetase family. Type-1 seryl-tRNA synthetase subfamily. In terms of assembly, homodimer. The tRNA molecule binds across the dimer.

The protein resides in the cytoplasm. It carries out the reaction tRNA(Ser) + L-serine + ATP = L-seryl-tRNA(Ser) + AMP + diphosphate + H(+). The enzyme catalyses tRNA(Sec) + L-serine + ATP = L-seryl-tRNA(Sec) + AMP + diphosphate + H(+). It participates in aminoacyl-tRNA biosynthesis; selenocysteinyl-tRNA(Sec) biosynthesis; L-seryl-tRNA(Sec) from L-serine and tRNA(Sec): step 1/1. Functionally, catalyzes the attachment of serine to tRNA(Ser). Is also able to aminoacylate tRNA(Sec) with serine, to form the misacylated tRNA L-seryl-tRNA(Sec), which will be further converted into selenocysteinyl-tRNA(Sec). The protein is Serine--tRNA ligase of Clostridium botulinum (strain 657 / Type Ba4).